Here is an 87-residue protein sequence, read N- to C-terminus: U3-theraphotoxin-Hhn1d (87 aa).

A signal peptide spans 1–24 (MVNMKASMFLTFAGLVLLFVVCYA). The propeptide occupies 25–52 (SESEEKEFPKEMLSSIFAVDNDFKQEER). 3 disulfides stabilise this stretch: Cys-54–Cys-67, Cys-61–Cys-72, and Cys-66–Cys-79.

Belongs to the neurotoxin 10 (Hwtx-1) family. 51 (Hntx-8) subfamily. Hntx-8 sub-subfamily. Expressed by the venom gland.

It is found in the secreted. Ion channel inhibitor. The sequence is that of U3-theraphotoxin-Hhn1d from Cyriopagopus hainanus (Chinese bird spider).